Reading from the N-terminus, the 607-residue chain is Rap1 GTPase-GDP dissociation stimulator 1-A (607 aa).

ARM repeat units lie at residues 79–118 (ELMR…NICY), 170–211 (DSLQ…NLAE), 347–390 (DGNC…NLAI), 391–431 (PVVN…MLID), and 479–519 (SKDV…LIAA).

In terms of assembly, interacts with ralB. Probably interacts with the post-translationally isoprenylated (geranyl-geranylation) forms of ral proteins. Interacts with both GDP-bound and GTP-bound forms of ralA, but interaction is much stronger with ralA-GDP. Weakly expressed in adult tissues with highest levels found in spleen, kidney, skin and A6 cells.

It localises to the cytoplasm. The protein localises to the cytosol. Its subcellular location is the endoplasmic reticulum. The protein resides in the mitochondrion. Its function is as follows. Stimulates GDP/GTP exchange reaction of a group of small GTP-binding proteins (G proteins) including Rap1a/Rap1b, RhoA, RhoB and KRas, by stimulating the dissociation of GDP from and the subsequent binding of GTP to each small G protein. The chain is Rap1 GTPase-GDP dissociation stimulator 1-A (rap1gds1-a) from Xenopus laevis (African clawed frog).